The chain runs to 390 residues: 3-ketosteroid-9-alpha-monooxygenase, oxygenase component (390 aa).

The Rieske domain maps to Trp32–Val134. [2Fe-2S] cluster-binding residues include Cys73, His75, Cys92, and His95. Asn181, His187, His192, and Asp311 together coordinate Fe cation.

Homotrimer. The two-component system 3-ketosteroid-9-alpha-monooxygenase is composed of an oxygenase component KshA and a reductase component KshB. [2Fe-2S] cluster serves as cofactor. The cofactor is Fe cation.

It catalyses the reaction androsta-1,4-diene-3,17-dione + 2 reduced [2Fe-2S]-[ferredoxin] + O2 + 2 H(+) = 9alpha-hydroxyandrosta-1,4-diene-3,17-dione + 2 oxidized [2Fe-2S]-[ferredoxin] + H2O. It functions in the pathway steroid metabolism; cholesterol degradation. Functionally, probably involved in the degradation of cholesterol. In vitro, catalyzes the introduction of a 9alpha-hydroxyl moiety into the ring B of 3-ketosteroid substrates such as 1,4-androstadiene-3,17-dione (ADD), 4-androstene-3,17-dione (AD), 4-androstene-17beta-ol-3-one (testosterone), 4-pregnene-3,20-dione (progesterone), 19-nor-4-androstene-3,17-dione, 1-(5alpha)-androstene-3,17-dione, 5alpha-androstane-3,17-dione, 5beta-androstane-3,17-dione, 5alpha-androstane-17beta-ol-3-one (stanolon), 11beta-hydrocortisone, 3-oxo-23,24-bisnorcholesta-4-en-22-oate (4-BNC), 23,24-bisnorcholesta-4-ene-22-oate, 3-oxo-23,24-bisnorcholesta-1,4-dien-22-oate (1,4-BNC) and 3-oxo-23,24-bisnorcholesta-1,4-dien-22-oyl-coenzyme A thioester (1,4-BNC-CoA). KshA5 has the broadest substrate range without a clear substrate preference and is active with Delta-4, Delta-1,4, 5alpha-H and 5beta-H steroids, as well as with steroids having bulky aliphatic side chains and an isopropionyl side chain at C17. This is 3-ketosteroid-9-alpha-monooxygenase, oxygenase component from Rhodococcus rhodochrous.